The primary structure comprises 233 residues: ATP synthase subunit C lysine N-methyltransferase (233 aa).

M1 bears the N-acetylmethionine mark. A helical membrane pass occupies residues F38–F58. The interval T56–G90 is required for mitochondrial location.

This sequence belongs to the ANT/ATPSC lysine N-methyltransferase family. In terms of tissue distribution, ubiquitously expressed.

The protein resides in the mitochondrion membrane. It catalyses the reaction L-lysyl-[protein] + 3 S-adenosyl-L-methionine = N(6),N(6),N(6)-trimethyl-L-lysyl-[protein] + 3 S-adenosyl-L-homocysteine + 3 H(+). Mitochondrial protein-lysine N-methyltransferase that trimethylates ATP synthase subunit C, ATP5MC1 and ATP5MC2. Trimethylation is required for proper incorporation of the C subunit into the ATP synthase complex and mitochondrial respiration. Promotes chronic pain. Involved in persistent inflammatory and neuropathic pain: methyltransferase activity in the mitochondria of sensory neurons promotes chronic pain via a pathway that depends on the production of reactive oxygen species (ROS) and on the engagement of spinal cord microglia. The protein is ATP synthase subunit C lysine N-methyltransferase of Homo sapiens (Human).